The primary structure comprises 179 residues: Inosine/xanthosine triphosphatase (179 aa).

Residue Glu71 participates in Mg(2+) binding. 71–72 (EA) serves as a coordination point for substrate.

Belongs to the YjjX NTPase family. In terms of assembly, homodimer. It depends on Mg(2+) as a cofactor. Mn(2+) serves as cofactor.

The catalysed reaction is XTP + H2O = XDP + phosphate + H(+). It catalyses the reaction ITP + H2O = IDP + phosphate + H(+). Functionally, phosphatase that hydrolyzes non-canonical purine nucleotides such as XTP and ITP to their respective diphosphate derivatives. Probably excludes non-canonical purines from DNA/RNA precursor pool, thus preventing their incorporation into DNA/RNA and avoiding chromosomal lesions. In Shewanella sp. (strain MR-4), this protein is Inosine/xanthosine triphosphatase.